The sequence spans 272 residues: Putative phosphoenolpyruvate synthase regulatory protein (272 aa).

152 to 159 (GVSRCGKT) provides a ligand contact to ADP.

It belongs to the pyruvate, phosphate/water dikinase regulatory protein family. PSRP subfamily.

The catalysed reaction is [pyruvate, water dikinase] + ADP = [pyruvate, water dikinase]-phosphate + AMP + H(+). It catalyses the reaction [pyruvate, water dikinase]-phosphate + phosphate + H(+) = [pyruvate, water dikinase] + diphosphate. Bifunctional serine/threonine kinase and phosphorylase involved in the regulation of the phosphoenolpyruvate synthase (PEPS) by catalyzing its phosphorylation/dephosphorylation. In Pseudomonas putida (strain W619), this protein is Putative phosphoenolpyruvate synthase regulatory protein.